The following is a 167-amino-acid chain: Leukotoxin-activating lysine-acyltransferase LktC serotype T3 (167 aa).

Active-site residues include His22 and Asp91.

It belongs to the RTX toxin acyltransferase family.

The protein localises to the cytoplasm. The catalysed reaction is a fatty acyl-[ACP] + L-lysyl-[protein] = N(6)-(fatty acyl)-L-lysyl-[protein] + holo-[ACP] + H(+). Involved in fatty acylation of the protoxin (LktA) at two internal lysine residues, thereby converting it to the active toxin. The chain is Leukotoxin-activating lysine-acyltransferase LktC serotype T3 (lktC) from Mannheimia haemolytica (Pasteurella haemolytica).